The sequence spans 506 residues: MENLSERFNALQEQLMNIYEAAEQTLKAQILHWQTLRKEAVTLYFARQKGINRLGYQPVPALAISEARAKEAIYMVLQLESLQKSAFALEPWTLVDTSTETFKSAPENHFKKGPVPVEVIYDKDEANANLYTMWTFVYYMDSDDVWHKTTSGVNQTGIYYLYGTFKHYYVLFADDAKRYSATGEWEVKVNKETVFTPVTSSTPPGSPGGQTDPDTSSKTPTTTTAATDTSPRRQSINKQSQQTETKRRGYGRRPSSRTRRPQTHQRRSRSRSRSRSSSQTHSSTTTTTTTYRSRSTSLNKTRARSRSRSTSRSTSTTSRRGGRGSSTRQRSRSPSTYTSKRSREGNTRGRGRGRQGRAGSSGGREQRRRRRSFSTSPDSSKRVRRESPKYRGVSPSEVGKQLRSVGAKHSGRLGRLLEEARDPPVILVRGDANTLKCFRNRARNKYRGLFRSFSTTFSWVAGDSIERLGRSRMLISFSCLTQRRDFDDAVKYPKGVEWSYGSLDSL.

Positions 1–201 (MENLSERFNA…ETVFTPVTSS (201 aa)) are transactivation domain. Positions 196-229 (TPVTSSTPPGSPGGQTDPDTSSKTPTTTTAATDT) are enriched in low complexity. Residues 196-406 (TPVTSSTPPG…EVGKQLRSVG (211 aa)) are disordered. The span at 232 to 243 (RRQSINKQSQQT) shows a compositional bias: polar residues. Over residues 248–274 (RGYGRRPSSRTRRPQTHQRRSRSRSRS) the composition is skewed to basic residues. Low complexity-rich tracts occupy residues 275–297 (RSSS…RSTS) and 310–339 (TSRS…TYTS). Residues 379-389 (SSKRVRRESPK) are compositionally biased toward basic and acidic residues. The segment at 422-506 (DPPVILVRGD…EWSYGSLDSL (85 aa)) is DNA-binding domain.

The protein belongs to the papillomaviridae E2 protein family. In terms of assembly, binds DNA as homodimer. Interacts with protein E1; this interaction greatly increases E1 DNA-binding activity. Interacts with protein L1; this interaction enhances E2-dependent replication and transcription activation. Interacts with protein L2; this interaction inhibits E2 transcriptional activity but not DNA replication function E2. Interacts with protein E7; this interaction inhibits E7 oncogenic activity. Interacts with host TAF1; this interaction modulates E2-dependent transcriptional regulation. Interacts with host BRD4; this interaction mediates E2 transcriptional activation function. Additionally, the interaction with host BRD4 on mitotic chromosomes mediates tethering of the viral genome. Interacts with host TOPBP1; this interaction is required for optimal viral DNA replication. In terms of processing, phosphorylated.

It is found in the host nucleus. Its function is as follows. Plays a role in the initiation of viral DNA replication. A dimer of E2 interacts with a dimer of E1 in order to improve specificity of E1 DNA binding activity. Once the complex recognizes and binds DNA at specific sites, the E2 dimer is removed from DNA. E2 also regulates viral transcription through binding to the E2RE response element (5'-ACCNNNNNNGGT-3') present in multiple copies in the regulatory regions of the viral genome. Activates or represses transcription depending on E2RE's position with regards to proximal promoter elements including the TATA-box. Repression occurs by sterically hindering the assembly of the transcription initiation complex. This Homo sapiens (Human) protein is Regulatory protein E2.